A 677-amino-acid chain; its full sequence is DNA ligase (677 aa).

Residues 34-38, 84-85, and E118 each bind NAD(+); these read DAQYD and SL. The active-site N6-AMP-lysine intermediate is K120. NAD(+) is bound by residues R141, E176, K283, and K307. Zn(2+) contacts are provided by C403, C406, C421, and C427. Residues 594-677 form the BRCT domain; the sequence is ETASPISGKT…DLLKTVSNSE (84 aa).

Belongs to the NAD-dependent DNA ligase family. LigA subfamily. Requires Mg(2+) as cofactor. Mn(2+) serves as cofactor.

It carries out the reaction NAD(+) + (deoxyribonucleotide)n-3'-hydroxyl + 5'-phospho-(deoxyribonucleotide)m = (deoxyribonucleotide)n+m + AMP + beta-nicotinamide D-nucleotide.. Functionally, DNA ligase that catalyzes the formation of phosphodiester linkages between 5'-phosphoryl and 3'-hydroxyl groups in double-stranded DNA using NAD as a coenzyme and as the energy source for the reaction. It is essential for DNA replication and repair of damaged DNA. In Anaplasma phagocytophilum (strain HZ), this protein is DNA ligase.